Reading from the N-terminus, the 180-residue chain is Probable Brix domain-containing ribosomal biogenesis protein (180 aa).

In terms of domain architecture, Brix spans 1 to 178; sequence MTTSRRPSPR…KPAEMVKRGR (178 aa).

Functionally, probably involved in the biogenesis of the ribosome. This is Probable Brix domain-containing ribosomal biogenesis protein from Aeropyrum pernix (strain ATCC 700893 / DSM 11879 / JCM 9820 / NBRC 100138 / K1).